The primary structure comprises 224 residues: MVKVRFLGHAAFEIVGSKRILIDPFLTGNPAAAAKPEELEADLILITHAHGDHIGDAVEIAKRTGAKIVAMYDIANYLVENNPGITTIGMNYGPTEVDGVKIVQVPAWHSSSDGKYSIGNACGYVIELDGVKIYHAGDTFVFKDMELLNELYGPIDLALLPIGGHFTMGPKEAAKAVELLKPRKVVPMHYNTWPPIAADPEEFKKLVGDKAEVIILKPGEILEL.

This sequence belongs to the UPF0173 family.

The sequence is that of UPF0173 metal-dependent hydrolase TON_1314 from Thermococcus onnurineus (strain NA1).